Here is a 133-residue protein sequence, read N- to C-terminus: Ribosome-binding factor A (133 aa).

The protein belongs to the RbfA family. As to quaternary structure, monomer. Binds 30S ribosomal subunits, but not 50S ribosomal subunits or 70S ribosomes.

The protein localises to the cytoplasm. Its function is as follows. One of several proteins that assist in the late maturation steps of the functional core of the 30S ribosomal subunit. Associates with free 30S ribosomal subunits (but not with 30S subunits that are part of 70S ribosomes or polysomes). Required for efficient processing of 16S rRNA. May interact with the 5'-terminal helix region of 16S rRNA. The polypeptide is Ribosome-binding factor A (Acinetobacter baylyi (strain ATCC 33305 / BD413 / ADP1)).